Reading from the N-terminus, the 376-residue chain is Queuine tRNA-ribosyltransferase (376 aa).

The Proton acceptor role is filled by aspartate 93. Substrate contacts are provided by residues 93 to 97 (DSGGF), aspartate 147, glutamine 190, and glycine 217. Residues 248–254 (GVGKPDD) form an RNA binding region. Catalysis depends on aspartate 267, which acts as the Nucleophile. Residues cysteine 305, cysteine 307, cysteine 310, and histidine 336 each contribute to the Zn(2+) site.

This sequence belongs to the queuine tRNA-ribosyltransferase family. In terms of assembly, homodimer. Within each dimer, one monomer is responsible for RNA recognition and catalysis, while the other monomer binds to the replacement base PreQ1. It depends on Zn(2+) as a cofactor.

It carries out the reaction 7-aminomethyl-7-carbaguanine + guanosine(34) in tRNA = 7-aminomethyl-7-carbaguanosine(34) in tRNA + guanine. The protein operates within tRNA modification; tRNA-queuosine biosynthesis. Catalyzes the base-exchange of a guanine (G) residue with the queuine precursor 7-aminomethyl-7-deazaguanine (PreQ1) at position 34 (anticodon wobble position) in tRNAs with GU(N) anticodons (tRNA-Asp, -Asn, -His and -Tyr). Catalysis occurs through a double-displacement mechanism. The nucleophile active site attacks the C1' of nucleotide 34 to detach the guanine base from the RNA, forming a covalent enzyme-RNA intermediate. The proton acceptor active site deprotonates the incoming PreQ1, allowing a nucleophilic attack on the C1' of the ribose to form the product. After dissociation, two additional enzymatic reactions on the tRNA convert PreQ1 to queuine (Q), resulting in the hypermodified nucleoside queuosine (7-(((4,5-cis-dihydroxy-2-cyclopenten-1-yl)amino)methyl)-7-deazaguanosine). The chain is Queuine tRNA-ribosyltransferase from Cereibacter sphaeroides (strain ATCC 17029 / ATH 2.4.9) (Rhodobacter sphaeroides).